A 171-amino-acid polypeptide reads, in one-letter code: Xanthine-guanine phosphoribosyltransferase (171 aa).

5-phospho-alpha-D-ribose 1-diphosphate is bound by residues 51–52 (RG) and 106–114 (DDLVDSGKT). A Mg(2+)-binding site is contributed by Asp107. Residues Asp110 and Ile153 each contribute to the guanine site. The xanthine site is built by Asp110 and Ile153. Residues 110–114 (DSGKT) and 152–153 (WI) contribute to the GMP site.

The protein belongs to the purine/pyrimidine phosphoribosyltransferase family. XGPT subfamily. In terms of assembly, homotetramer. Mg(2+) is required as a cofactor.

It localises to the cell inner membrane. It catalyses the reaction GMP + diphosphate = guanine + 5-phospho-alpha-D-ribose 1-diphosphate. The catalysed reaction is XMP + diphosphate = xanthine + 5-phospho-alpha-D-ribose 1-diphosphate. The enzyme catalyses IMP + diphosphate = hypoxanthine + 5-phospho-alpha-D-ribose 1-diphosphate. It participates in purine metabolism; GMP biosynthesis via salvage pathway; GMP from guanine: step 1/1. Its pathway is purine metabolism; XMP biosynthesis via salvage pathway; XMP from xanthine: step 1/1. Its function is as follows. Purine salvage pathway enzyme that catalyzes the transfer of the ribosyl-5-phosphate group from 5-phospho-alpha-D-ribose 1-diphosphate (PRPP) to the N9 position of the 6-oxopurines guanine and xanthine to form the corresponding ribonucleotides GMP (guanosine 5'-monophosphate) and XMP (xanthosine 5'-monophosphate), with the release of PPi. To a lesser extent, also acts on hypoxanthine. The chain is Xanthine-guanine phosphoribosyltransferase from Ruegeria pomeroyi (strain ATCC 700808 / DSM 15171 / DSS-3) (Silicibacter pomeroyi).